A 396-amino-acid chain; its full sequence is Queuine tRNA-ribosyltransferase catalytic subunit 1 (396 aa).

Catalysis depends on Asp-99, which acts as the Proton acceptor. Queuine contacts are provided by residues 99–103, Asp-153, Gln-196, and Gly-223; that span reads DSGGF. An RNA binding region spans residues 254–260; it reads GVGYATD. Residue Asp-273 is the Nucleophile of the active site. The interval 278–282 is RNA binding; important for wobble base 34 recognition; the sequence is TRTAR. The Zn(2+) site is built by Cys-311, Cys-313, Cys-316, and His-341.

Belongs to the queuine tRNA-ribosyltransferase family. Heterodimer of a catalytic subunit qtrt1 and an accessory subunit qtrt2. Requires Zn(2+) as cofactor.

Its subcellular location is the cytoplasm. It is found in the mitochondrion outer membrane. It catalyses the reaction guanosine(34) in tRNA + queuine = queuosine(34) in tRNA + guanine. Functionally, catalytic subunit of the queuine tRNA-ribosyltransferase (TGT) that catalyzes the base-exchange of a guanine (G) residue with queuine (Q) at position 34 (anticodon wobble position) in tRNAs with GU(N) anticodons (tRNA-Asp, -Asn, -His and -Tyr), resulting in the hypermodified nucleoside queuosine (7-(((4,5-cis-dihydroxy-2-cyclopenten-1-yl)amino)methyl)-7-deazaguanosine). Catalysis occurs through a double-displacement mechanism. The nucleophile active site attacks the C1' of nucleotide 34 to detach the guanine base from the RNA, forming a covalent enzyme-RNA intermediate. The proton acceptor active site deprotonates the incoming queuine, allowing a nucleophilic attack on the C1' of the ribose to form the product. This is Queuine tRNA-ribosyltransferase catalytic subunit 1 from Xenopus laevis (African clawed frog).